The following is a 63-amino-acid chain: Cytochrome c oxidase subunit 7C, mitochondrial (63 aa).

The transit peptide at 1 to 16 (MLGHSIRRFTTSVVRR) directs the protein to the mitochondrion. The Mitochondrial matrix portion of the chain corresponds to 17 to 33 (SHYEEGPGKNLPFSVKN). N6-acetyllysine; alternate is present on K25. The residue at position 25 (K25) is an N6-succinyllysine; alternate. A helical transmembrane segment spans residues 34–60 (KWALLVKMSLYFGSAFATPFLIVRHQL). At 61–63 (LKQ) the chain is on the mitochondrial intermembrane side.

This sequence belongs to the cytochrome c oxidase VIIc family. In terms of assembly, component of the cytochrome c oxidase (complex IV, CIV), a multisubunit enzyme composed of 14 subunits. The complex is composed of a catalytic core of 3 subunits MT-CO1, MT-CO2 and MT-CO3, encoded in the mitochondrial DNA, and 11 supernumerary subunits COX4I, COX5A, COX5B, COX6A, COX6B, COX6C, COX7A, COX7B, COX7C, COX8 and NDUFA4, which are encoded in the nuclear genome. The complex exists as a monomer or a dimer and forms supercomplexes (SCs) in the inner mitochondrial membrane with NADH-ubiquinone oxidoreductase (complex I, CI) and ubiquinol-cytochrome c oxidoreductase (cytochrome b-c1 complex, complex III, CIII), resulting in different assemblies (supercomplex SCI(1)III(2)IV(1) and megacomplex MCI(2)III(2)IV(2)). Interacts with RAB5IF.

The protein localises to the mitochondrion inner membrane. It functions in the pathway energy metabolism; oxidative phosphorylation. Its function is as follows. Component of the cytochrome c oxidase, the last enzyme in the mitochondrial electron transport chain which drives oxidative phosphorylation. The respiratory chain contains 3 multisubunit complexes succinate dehydrogenase (complex II, CII), ubiquinol-cytochrome c oxidoreductase (cytochrome b-c1 complex, complex III, CIII) and cytochrome c oxidase (complex IV, CIV), that cooperate to transfer electrons derived from NADH and succinate to molecular oxygen, creating an electrochemical gradient over the inner membrane that drives transmembrane transport and the ATP synthase. Cytochrome c oxidase is the component of the respiratory chain that catalyzes the reduction of oxygen to water. Electrons originating from reduced cytochrome c in the intermembrane space (IMS) are transferred via the dinuclear copper A center (CU(A)) of subunit 2 and heme A of subunit 1 to the active site in subunit 1, a binuclear center (BNC) formed by heme A3 and copper B (CU(B)). The BNC reduces molecular oxygen to 2 water molecules using 4 electrons from cytochrome c in the IMS and 4 protons from the mitochondrial matrix. This Papio hamadryas (Hamadryas baboon) protein is Cytochrome c oxidase subunit 7C, mitochondrial (COX7C).